Reading from the N-terminus, the 367-residue chain is Protein pxr1 (367 aa).

2 disordered regions span residues 1-28 and 156-336; these read MGLSAPKNKIKLSHDPNNTKWSGNTDSF and KALK…PMGI. Over residues 15–27 the composition is skewed to polar residues; sequence DPNNTKWSGNTDS. Residues 25–79 form the G-patch domain; sequence TDSFGHRMMKSQGWTPGEYLGAKDAAHAEFHTAANASHIRVVIKDNNLGLGAKIG. The span at 167 to 182 shows a compositional bias: acidic residues; that stretch reads SSDDSDSSSDEEEEEK. 3 stretches are compositionally biased toward basic residues: residues 209-221, 236-248, and 265-277; these read SKKSKKDKKSKKR, KSKKSKKDRKSKS, and KARKKEKKEKKRR. The span at 282 to 296 shows a compositional bias: low complexity; the sequence is ATAGADTEETSSTSK. Over residues 297 to 309 the composition is skewed to basic residues; sequence SSKKNSKKDKHKS. The segment covering 310-328 has biased composition (low complexity); that stretch reads SSASESSTKESTPTVTESS.

It belongs to the PINX1 family.

The protein localises to the nucleus. It is found in the nucleolus. In terms of biological role, involved in rRNA-processing at A0, A1 and A2 sites and negatively regulates telomerase. The sequence is that of Protein pxr1 (pxr1) from Sclerotinia sclerotiorum (strain ATCC 18683 / 1980 / Ss-1) (White mold).